Here is a 416-residue protein sequence, read N- to C-terminus: Imidazolonepropionase (416 aa).

Fe(3+)-binding residues include H78 and H80. H78 and H80 together coordinate Zn(2+). 4-imidazolone-5-propanoate contacts are provided by R87, Y150, and H183. An N-formimidoyl-L-glutamate-binding site is contributed by Y150. A Fe(3+)-binding site is contributed by H248. H248 is a Zn(2+) binding site. Position 251 (Q251) interacts with 4-imidazolone-5-propanoate. Fe(3+) is bound at residue D323. D323 is a binding site for Zn(2+). Positions 325 and 327 each coordinate N-formimidoyl-L-glutamate. T328 provides a ligand contact to 4-imidazolone-5-propanoate.

This sequence belongs to the metallo-dependent hydrolases superfamily. HutI family. The cofactor is Zn(2+). Fe(3+) is required as a cofactor.

It localises to the cytoplasm. The enzyme catalyses 4-imidazolone-5-propanoate + H2O = N-formimidoyl-L-glutamate. Its pathway is amino-acid degradation; L-histidine degradation into L-glutamate; N-formimidoyl-L-glutamate from L-histidine: step 3/3. Catalyzes the hydrolytic cleavage of the carbon-nitrogen bond in imidazolone-5-propanoate to yield N-formimidoyl-L-glutamate. It is the third step in the universal histidine degradation pathway. The chain is Imidazolonepropionase from Vibrio campbellii (strain ATCC BAA-1116).